The primary structure comprises 381 residues: L-lactate dehydrogenase (381 aa).

An FMN hydroxy acid dehydrogenase domain is found at 1 to 380 (MIISSTNDYR…TRDALVDLSK (380 aa)). Tyr24 serves as a coordination point for substrate. Residues Ser106 and Gln127 each contribute to the FMN site. Tyr129 serves as a coordination point for substrate. Thr155 lines the FMN pocket. Position 164 (Arg164) interacts with substrate. Lys251 provides a ligand contact to FMN. His275 functions as the Proton acceptor in the catalytic mechanism. Arg278 provides a ligand contact to substrate. 306–330 (DSGIRNGLDIVRMLALGADATMLGR) contacts FMN.

It belongs to the FMN-dependent alpha-hydroxy acid dehydrogenase family. FMN serves as cofactor.

The protein localises to the cell inner membrane. It catalyses the reaction (S)-lactate + A = pyruvate + AH2. Catalyzes the conversion of L-lactate to pyruvate. Is coupled to the respiratory chain. The protein is L-lactate dehydrogenase of Actinobacillus pleuropneumoniae serotype 3 (strain JL03).